The sequence spans 39 residues: Photosystem II reaction center protein J (39 aa).

The helical transmembrane segment at 9–29 threads the bilayer; sequence LWLVVTFGGIVVLTVLGIFIY.

It belongs to the PsbJ family. In terms of assembly, PSII is composed of 1 copy each of membrane proteins PsbA, PsbB, PsbC, PsbD, PsbE, PsbF, PsbH, PsbI, PsbJ, PsbK, PsbL, PsbM, PsbT, PsbY, PsbZ, Psb30/Ycf12, at least 3 peripheral proteins of the oxygen-evolving complex and a large number of cofactors. It forms dimeric complexes.

The protein resides in the plastid. The protein localises to the chloroplast thylakoid membrane. Functionally, one of the components of the core complex of photosystem II (PSII). PSII is a light-driven water:plastoquinone oxidoreductase that uses light energy to abstract electrons from H(2)O, generating O(2) and a proton gradient subsequently used for ATP formation. It consists of a core antenna complex that captures photons, and an electron transfer chain that converts photonic excitation into a charge separation. This chain is Photosystem II reaction center protein J, found in Cyanidium caldarium (Red alga).